Reading from the N-terminus, the 562-residue chain is Formate--tetrahydrofolate ligase (562 aa).

71-78 (TPAGEGKS) is a binding site for ATP.

This sequence belongs to the formate--tetrahydrofolate ligase family.

The enzyme catalyses (6S)-5,6,7,8-tetrahydrofolate + formate + ATP = (6R)-10-formyltetrahydrofolate + ADP + phosphate. Its pathway is one-carbon metabolism; tetrahydrofolate interconversion. The polypeptide is Formate--tetrahydrofolate ligase (Bacillus anthracis (strain A0248)).